The sequence spans 112 residues: Probable fatty acid-binding protein (112 aa).

It belongs to the calycin superfamily. Fatty-acid binding protein (FABP) family.

The protein is Probable fatty acid-binding protein of Anopheles gambiae (African malaria mosquito).